Reading from the N-terminus, the 276-residue chain is Protein MGF 360-15R (276 aa).

The protein belongs to the asfivirus MGF 360 family.

Its function is as follows. Plays a role in virus cell tropism, and may be required for efficient virus replication in macrophages. This chain is Protein MGF 360-15R, found in African swine fever virus (isolate Tick/South Africa/Pretoriuskop Pr4/1996) (ASFV).